Here is a 301-residue protein sequence, read N- to C-terminus: HTH-type transcriptional regulator MtrA (301 aa).

The 102-residue stretch at Lys-196–Glu-297 folds into the HTH araC/xylS-type domain. 2 consecutive DNA-binding regions (H-T-H motif) follow at residues Asp-216–Val-237 and Val-264–Tyr-287.

With respect to regulation, the affinity for the mtrCDE promoter increases 2-fold in the presence of TX-100, a known effector and substrate of the MtrCDE pump. Its function is as follows. Involved in the induction of the mtrCDE-encoded efflux pump. Binds specifically to the mtrCDE promoter region. Required for high-level inducible resistance to the detergent Triton X-100 (TX-100) and the spermicide nonoxynol-9 (N-9). This is HTH-type transcriptional regulator MtrA from Neisseria gonorrhoeae.